We begin with the raw amino-acid sequence, 172 residues long: MDLKDSIRVIDGFPKEGISFKDVTTLIQDKEAYKYSVDKIGEYLKDKNVDLIVAPEARGFLFGAPVAYKIGAGFIPVRKKGKLPCETVEVTYELEYGEDILEMHKDAIKKGQRVAIVDDLLATGGTINSVAKLVEALGGEVVAACFVVELTDLNGKDKLGDYDTMSLVKYNV.

It belongs to the purine/pyrimidine phosphoribosyltransferase family. As to quaternary structure, homodimer.

The protein resides in the cytoplasm. The enzyme catalyses AMP + diphosphate = 5-phospho-alpha-D-ribose 1-diphosphate + adenine. It functions in the pathway purine metabolism; AMP biosynthesis via salvage pathway; AMP from adenine: step 1/1. In terms of biological role, catalyzes a salvage reaction resulting in the formation of AMP, that is energically less costly than de novo synthesis. The sequence is that of Adenine phosphoribosyltransferase from Clostridium acetobutylicum (strain ATCC 824 / DSM 792 / JCM 1419 / IAM 19013 / LMG 5710 / NBRC 13948 / NRRL B-527 / VKM B-1787 / 2291 / W).